Here is a 191-residue protein sequence, read N- to C-terminus: dTTP/UTP pyrophosphatase (191 aa).

D68 acts as the Proton acceptor in catalysis.

The protein belongs to the Maf family. YhdE subfamily. Requires a divalent metal cation as cofactor.

It is found in the cytoplasm. It carries out the reaction dTTP + H2O = dTMP + diphosphate + H(+). It catalyses the reaction UTP + H2O = UMP + diphosphate + H(+). Its function is as follows. Nucleoside triphosphate pyrophosphatase that hydrolyzes dTTP and UTP. May have a dual role in cell division arrest and in preventing the incorporation of modified nucleotides into cellular nucleic acids. The polypeptide is dTTP/UTP pyrophosphatase (Thermoanaerobacter pseudethanolicus (strain ATCC 33223 / 39E) (Clostridium thermohydrosulfuricum)).